A 105-amino-acid chain; its full sequence is Anti-sigma factor RsrA (105 aa).

The Zn(2+) site is built by C11, H37, C41, and C44. An intrachain disulfide couples C11 to C44. A contributes to redox-sensitivity region spans residues 33-47; sequence KFEHHFEECSPCLEK. The segment at 86 to 105 is disordered; the sequence is QSVPEHDVAAAPSSSAPQES. The segment covering 94–105 has biased composition (low complexity); sequence AAAPSSSAPQES.

It belongs to the zinc-associated anti-sigma factor (ZAS) superfamily. Interacts with cognate sigma factor SigR under reducing but not oxiding conditions. Treatment with the thiol-oxidzing agent diamide inhibits the interaction, while incubation with thioredoxin (trxA) stimulates the interaction. Requires Zn(2+) as cofactor. In terms of processing, under oxidizing conditions up to 3 disulfide bonds are formed. A single disulfide bond inhibits binding to SigR. Cys-11 forms a disulfide bond with either Cys-44 (the major bind) or Cys-41 (a minor bond).

A redox-regulated anti-sigma factor for extracytoplasmic function (ECF) sigma factor SigR, and a key sensor of disulfide stress. Holds SigR, its cognate ECF sigma factor, in an inactive form, inhibiting its sigma activity under reducing but not oxidizing conditions; oxidation and reduction of the anti-sigma factor is reversible. Mycothiol (MSH) is competent for reduction of RsrA, allowing it to bind to SigR. In conjunction with its cognate sigma factor SigR may sense the intracellular level of reduced MSH. Probably releases SigR during oxidative stress. This is Anti-sigma factor RsrA (rsrA) from Streptomyces coelicolor (strain ATCC BAA-471 / A3(2) / M145).